A 362-amino-acid chain; its full sequence is Phosphoserine aminotransferase (362 aa).

Position 43 (R43) interacts with L-glutamate. Pyridoxal 5'-phosphate contacts are provided by residues 77–78, W103, T153, D173, and Q196; that span reads AS. K197 carries the N6-(pyridoxal phosphate)lysine modification. Residue 238-239 participates in pyridoxal 5'-phosphate binding; it reads NT.

The protein belongs to the class-V pyridoxal-phosphate-dependent aminotransferase family. SerC subfamily. As to quaternary structure, homodimer. The cofactor is pyridoxal 5'-phosphate.

The protein resides in the cytoplasm. The enzyme catalyses O-phospho-L-serine + 2-oxoglutarate = 3-phosphooxypyruvate + L-glutamate. It carries out the reaction 4-(phosphooxy)-L-threonine + 2-oxoglutarate = (R)-3-hydroxy-2-oxo-4-phosphooxybutanoate + L-glutamate. The protein operates within amino-acid biosynthesis; L-serine biosynthesis; L-serine from 3-phospho-D-glycerate: step 2/3. It functions in the pathway cofactor biosynthesis; pyridoxine 5'-phosphate biosynthesis; pyridoxine 5'-phosphate from D-erythrose 4-phosphate: step 3/5. Its function is as follows. Catalyzes the reversible conversion of 3-phosphohydroxypyruvate to phosphoserine and of 3-hydroxy-2-oxo-4-phosphonooxybutanoate to phosphohydroxythreonine. In Niallia circulans (Bacillus circulans), this protein is Phosphoserine aminotransferase (serC).